The sequence spans 498 residues: Ribosomal RNA small subunit methyltransferase G 2 (498 aa).

The segment at 1-230 is methyltransferase G; it reads MRNGTIRYPG…FQRLGPPTRI (230 aa). S-adenosyl-L-methionine-binding residues include Gly89, Met94, and Arg154. Residues 231 to 498 are methyltransferase TrmH family; sequence RKETAMKRHG…SQTKHSPAPA (268 aa).

It in the N-terminal section; belongs to the methyltransferase superfamily. RNA methyltransferase RsmG family. This sequence in the C-terminal section; belongs to the class IV-like SAM-binding methyltransferase superfamily. RNA methyltransferase TrmH family.

The protein resides in the cytoplasm. It carries out the reaction guanosine(527) in 16S rRNA + S-adenosyl-L-methionine = N(7)-methylguanosine(527) in 16S rRNA + S-adenosyl-L-homocysteine. Its function is as follows. Specifically methylates the N7 position of guanine in position 527 of 16S rRNA. The chain is Ribosomal RNA small subunit methyltransferase G 2 (rsmG2) from Syntrophobacter fumaroxidans (strain DSM 10017 / MPOB).